Reading from the N-terminus, the 265-residue chain is Transcription factor BHLH089 (265 aa).

The interval 1 to 132 (MDPAPTLAAE…PPPPEPPKQD (132 aa)) is disordered. 2 stretches are compositionally biased toward gly residues: residues 17–29 (LGGGGGGGGGGRG) and 44–53 (SRGGGGGGGA). A compositionally biased stretch (polar residues) spans 95–105 (SKSSGDNSSLR). A basic motif; degenerate region spans residues 142-155 (QATDSHSLAERARR). The 51-residue stretch at 142-192 (QATDSHSLAERARREKISERMKILQDLVPGCNKVIGKASVLDEIINYIQAL) folds into the bHLH domain. A helix-loop-helix motif region spans residues 156-192 (EKISERMKILQDLVPGCNKVIGKASVLDEIINYIQAL).

It belongs to the bHLH protein family. As to quaternary structure, interacts with RSS3.

It localises to the nucleus. Functionally, transcription factor that may regulate jasmonate-regulated genes. In Oryza sativa subsp. japonica (Rice), this protein is Transcription factor BHLH089.